Reading from the N-terminus, the 175-residue chain is Shikimate kinase (175 aa).

11–16 provides a ligand contact to ATP; that stretch reads GAGKTT. Thr15 serves as a coordination point for Mg(2+). 3 residues coordinate substrate: Asp33, Arg57, and Gly79. Arg118 is an ATP binding site. A substrate-binding site is contributed by Arg140.

It belongs to the shikimate kinase family. Monomer. The cofactor is Mg(2+).

The protein localises to the cytoplasm. The catalysed reaction is shikimate + ATP = 3-phosphoshikimate + ADP + H(+). It functions in the pathway metabolic intermediate biosynthesis; chorismate biosynthesis; chorismate from D-erythrose 4-phosphate and phosphoenolpyruvate: step 5/7. In terms of biological role, catalyzes the specific phosphorylation of the 3-hydroxyl group of shikimic acid using ATP as a cosubstrate. The polypeptide is Shikimate kinase (Bacteroides thetaiotaomicron (strain ATCC 29148 / DSM 2079 / JCM 5827 / CCUG 10774 / NCTC 10582 / VPI-5482 / E50)).